The following is a 44-amino-acid chain: uncharacterized protein (44 aa).

The first 16 residues, 1 to 16, serve as a signal peptide directing secretion; that stretch reads MRISLLAVILALLFVA.

This is an uncharacterized protein from Helicobacter pylori (strain ATCC 700392 / 26695) (Campylobacter pylori).